The following is a 285-amino-acid chain: Protease HtpX homolog (285 aa).

2 helical membrane-spanning segments follow: residues 7 to 27 (TAMLMAAITALFIVIGGMIGG) and 30 to 50 (GMTIALVIALGMNFFSYWFSD). Histidine 131 is a Zn(2+) binding site. The active site involves glutamate 132. Residue histidine 135 participates in Zn(2+) binding. 2 helical membrane-spanning segments follow: residues 141–161 (ILISTISATMAGAISALANFA) and 177–197 (IAGIAVALLAPIAGALIQMAI). Glutamate 202 is a binding site for Zn(2+).

It belongs to the peptidase M48B family. Requires Zn(2+) as cofactor.

It is found in the cell inner membrane. This chain is Protease HtpX homolog, found in Paraburkholderia phytofirmans (strain DSM 17436 / LMG 22146 / PsJN) (Burkholderia phytofirmans).